We begin with the raw amino-acid sequence, 434 residues long: 3-phosphoshikimate 1-carboxyvinyltransferase (434 aa).

Lys-22, Ser-23, and Arg-27 together coordinate 3-phosphoshikimate. Lys-22 contacts phosphoenolpyruvate. Phosphoenolpyruvate is bound by residues Gly-93 and Arg-121. 3-phosphoshikimate-binding residues include Ser-168, Ser-169, Gln-170, Ser-199, Asp-320, and Lys-347. Gln-170 lines the phosphoenolpyruvate pocket. The Proton acceptor role is filled by Asp-320. 3 residues coordinate phosphoenolpyruvate: Arg-351, Arg-395, and Lys-420.

It belongs to the EPSP synthase family. Monomer.

It is found in the cytoplasm. It carries out the reaction 3-phosphoshikimate + phosphoenolpyruvate = 5-O-(1-carboxyvinyl)-3-phosphoshikimate + phosphate. It functions in the pathway metabolic intermediate biosynthesis; chorismate biosynthesis; chorismate from D-erythrose 4-phosphate and phosphoenolpyruvate: step 6/7. Functionally, catalyzes the transfer of the enolpyruvyl moiety of phosphoenolpyruvate (PEP) to the 5-hydroxyl of shikimate-3-phosphate (S3P) to produce enolpyruvyl shikimate-3-phosphate and inorganic phosphate. In Cupriavidus taiwanensis (strain DSM 17343 / BCRC 17206 / CCUG 44338 / CIP 107171 / LMG 19424 / R1) (Ralstonia taiwanensis (strain LMG 19424)), this protein is 3-phosphoshikimate 1-carboxyvinyltransferase.